The primary structure comprises 379 residues: Homoserine O-acetyltransferase (379 aa).

Residues 52-356 (NVVMVLHALT…IRGHDGFLVE (305 aa)) enclose the AB hydrolase-1 domain. The Nucleophile role is filled by Ser-157. Arg-227 is a binding site for substrate. Catalysis depends on residues Asp-320 and His-350. Position 351 (Asp-351) interacts with substrate.

The protein belongs to the AB hydrolase superfamily. MetX family. Homodimer.

It is found in the cytoplasm. The catalysed reaction is L-homoserine + acetyl-CoA = O-acetyl-L-homoserine + CoA. It functions in the pathway amino-acid biosynthesis; L-methionine biosynthesis via de novo pathway; O-acetyl-L-homoserine from L-homoserine: step 1/1. Transfers an acetyl group from acetyl-CoA to L-homoserine, forming acetyl-L-homoserine. The protein is Homoserine O-acetyltransferase of Mycobacterium ulcerans (strain Agy99).